Consider the following 189-residue polypeptide: 3-isopropylmalate dehydratase small subunit (189 aa).

It belongs to the LeuD family. LeuD type 1 subfamily. As to quaternary structure, heterodimer of LeuC and LeuD.

The catalysed reaction is (2R,3S)-3-isopropylmalate = (2S)-2-isopropylmalate. Its pathway is amino-acid biosynthesis; L-leucine biosynthesis; L-leucine from 3-methyl-2-oxobutanoate: step 2/4. Catalyzes the isomerization between 2-isopropylmalate and 3-isopropylmalate, via the formation of 2-isopropylmaleate. The chain is 3-isopropylmalate dehydratase small subunit from Staphylococcus epidermidis (strain ATCC 35984 / DSM 28319 / BCRC 17069 / CCUG 31568 / BM 3577 / RP62A).